The primary structure comprises 486 residues: MKALDQLTFDNRFARLGDAFSTQVLPEPIADPRLVVASESAMALLDLDPAQAELPVFAELFSGHKLWEEADPRAMVYSGHQFGSYNPRLGDGRGLLLAEVLNDAGEHWDLHLKGAGQTPYSRMGDGRAVLRSSIREFLASEALHALGIATSRALCVIGSSTPVWRETRESAAMLTRLAQSHVRFGHFEYFYYTKQPEQQRVLIDHVLEQHYPECREAEQPYLAMFRTIVERNAELIARWQAYGFCHGVMNTDNMSILGITFDFGPYAFLDDFDANFICNHSDDRGRYSYANQVPIAHWNLSALAQALTTVIEVEPLKEALGLFLPLYQAHYLDLMRRRLGLTTAEDDDMVLVERLLQCMQRGGVDYSLFFRKLGEQPVAEALKVARDDFIDLAGFDAWGADYLARCGREPGNAEGRRERMHAVNPLYVLRNYLAQKAIEAAEAGDYSEVRRLHQVLARPFEEQPGMQAYAERPPEWGKHLEISCSS.

Residues Gly-90, Gly-92, Arg-93, Lys-113, Asp-125, Gly-126, Arg-176, and Arg-183 each contribute to the ATP site. Residue Asp-252 is the Proton acceptor of the active site. Mg(2+) is bound by residues Asn-253 and Asp-262. Asp-262 provides a ligand contact to ATP.

Belongs to the SELO family. It depends on Mg(2+) as a cofactor. Requires Mn(2+) as cofactor.

It catalyses the reaction L-seryl-[protein] + ATP = 3-O-(5'-adenylyl)-L-seryl-[protein] + diphosphate. The enzyme catalyses L-threonyl-[protein] + ATP = 3-O-(5'-adenylyl)-L-threonyl-[protein] + diphosphate. The catalysed reaction is L-tyrosyl-[protein] + ATP = O-(5'-adenylyl)-L-tyrosyl-[protein] + diphosphate. It carries out the reaction L-histidyl-[protein] + UTP = N(tele)-(5'-uridylyl)-L-histidyl-[protein] + diphosphate. It catalyses the reaction L-seryl-[protein] + UTP = O-(5'-uridylyl)-L-seryl-[protein] + diphosphate. The enzyme catalyses L-tyrosyl-[protein] + UTP = O-(5'-uridylyl)-L-tyrosyl-[protein] + diphosphate. Functionally, nucleotidyltransferase involved in the post-translational modification of proteins. It can catalyze the addition of adenosine monophosphate (AMP) or uridine monophosphate (UMP) to a protein, resulting in modifications known as AMPylation and UMPylation. The sequence is that of Protein nucleotidyltransferase YdiU from Pseudomonas putida (strain ATCC 47054 / DSM 6125 / CFBP 8728 / NCIMB 11950 / KT2440).